Here is a 641-residue protein sequence, read N- to C-terminus: Ribosomal oxygenase 1 (641 aa).

Position 1 is an N-acetylmethionine (Met-1). Disordered regions lie at residues 1–35 (MDGL…LPLR) and 54–80 (RTQT…DALP). Residues 12 to 23 (RRGRPKRRRKPQ) show a composition bias toward basic residues. 3 positions are modified to phosphoserine: Ser-60, Ser-63, and Ser-109. In terms of domain architecture, JmjC spans 294–439 (CSLRLLCPQA…DFLEAILPLA (146 aa)). 3 residues coordinate Fe cation: His-340, Asp-342, and His-405.

It belongs to the ROX family. NO66 subfamily. In terms of assembly, interacts with SP7/OSX; the interaction is direct. Interacts with MYC. Interacts with PHF19; leading to its recruitment to H3K36me3 sites. The cofactor is Fe(2+). Widely expressed. Overexpressed in lung carcinomas.

It localises to the nucleus. The protein localises to the nucleolus. It is found in the nucleoplasm. It carries out the reaction N(6),N(6)-dimethyl-L-lysyl(36)-[histone H3] + 2 2-oxoglutarate + 2 O2 = L-lysyl(36)-[histone H3] + 2 formaldehyde + 2 succinate + 2 CO2. The catalysed reaction is N(6)-methyl-L-lysyl-[protein] + 2-oxoglutarate + O2 = L-lysyl-[protein] + formaldehyde + succinate + CO2. It catalyses the reaction L-histidyl-[protein] + 2-oxoglutarate + O2 = (3S)-3-hydroxy-L-histidyl-[protein] + succinate + CO2. Oxygenase that can act as both a histone lysine demethylase and a ribosomal histidine hydroxylase. Specifically demethylates 'Lys-4' (H3K4me) and 'Lys-36' (H3K36me) of histone H3, thereby playing a central role in histone code. Preferentially demethylates trimethylated H3 'Lys-4' (H3K4me3) and monomethylated H3 'Lys-4' (H3K4me1) residues, while it has weaker activity for dimethylated H3 'Lys-36' (H3K36me2). Acts as a regulator of osteoblast differentiation via its interaction with SP7/OSX by demethylating H3K4me and H3K36me, thereby inhibiting SP7/OSX-mediated promoter activation. Also catalyzes demethylation of non-histone proteins, such as CGAS: demethylation of monomethylated CGAS promotes interaction between CGAS and PARP1, followed by PARP1 inactivation. Also catalyzes the hydroxylation of 60S ribosomal protein L8 on 'His-216', thereby playing a role in ribosome biogenesis. Participates in MYC-induced transcriptional activation. This Homo sapiens (Human) protein is Ribosomal oxygenase 1.